The sequence spans 215 residues: MKLFIDTANIEEIREAYALGIICGVTTNPSLIAREGRNFAQVVREIAAIVDGPISAEAVSPDAAGMIAEAEELSSIHPNIVVKIPMTAEGLKAVKILAQKGIRTNVTLIFSANQALLAARAGASYVSPFVGRLDDVSQDGAALIYDIMEIFERHCIRTEVIAASIRHPVHVTMAAKAGAHIATVPYKVLMQMIGHPLTEAGIKKFLEDWEKVKDK.

K83 (schiff-base intermediate with substrate) is an active-site residue.

This sequence belongs to the transaldolase family. Type 3B subfamily.

It is found in the cytoplasm. It catalyses the reaction D-sedoheptulose 7-phosphate + D-glyceraldehyde 3-phosphate = D-erythrose 4-phosphate + beta-D-fructose 6-phosphate. It functions in the pathway carbohydrate degradation; pentose phosphate pathway; D-glyceraldehyde 3-phosphate and beta-D-fructose 6-phosphate from D-ribose 5-phosphate and D-xylulose 5-phosphate (non-oxidative stage): step 2/3. Transaldolase is important for the balance of metabolites in the pentose-phosphate pathway. In Pelotomaculum thermopropionicum (strain DSM 13744 / JCM 10971 / SI), this protein is Probable transaldolase.